Reading from the N-terminus, the 235-residue chain is Probable transcriptional regulatory protein Cj1172c (235 aa).

Belongs to the TACO1 family.

The protein resides in the cytoplasm. In Campylobacter jejuni subsp. jejuni serotype O:2 (strain ATCC 700819 / NCTC 11168), this protein is Probable transcriptional regulatory protein Cj1172c.